The primary structure comprises 356 residues: MAIDENKQKALAAALGQIEKQFGKGSIMRLGEDRSMDVETISTGSLSLDIALGAGGLPMGRIVEIYGPESSGKTTLALQVIAAAQREGKTCAFIDAEHALDPIYAKKLGVDIDNLLCSQPDTGEQALEICDALTRSGAVDVIIVDSVAALTPKAEIEGEIGDSHMGLAARMMSQAMRKLAGNLKNANTLLIFINQIRMKIGVMFGNPETTTGGNALKFYASVRLDIRRIGAVKDGDVVVGSETRVKVVKNKIAAPFKQAEFQILYGEGININGELVDLGVKHKLIEKAGAWYSYNGDKIGQGKANASNYLKENPAIAAELDKKLREMLLNGGNGEQPVAAATAEFADGADETNEEF.

67–74 is a binding site for ATP; that stretch reads GPESSGKT.

Belongs to the RecA family.

Its subcellular location is the cytoplasm. In terms of biological role, can catalyze the hydrolysis of ATP in the presence of single-stranded DNA, the ATP-dependent uptake of single-stranded DNA by duplex DNA, and the ATP-dependent hybridization of homologous single-stranded DNAs. It interacts with LexA causing its activation and leading to its autocatalytic cleavage. This chain is Protein RecA, found in Yersinia pestis (strain Pestoides F).